The following is a 738-amino-acid chain: Interleukin-12 receptor subunit beta-1 (738 aa).

Residues 1–19 (MDMMGLAGTSKHITFLLLC) form the signal peptide. The Extracellular portion of the chain corresponds to 20 to 565 (QLGASGPGDG…QRFSFEVQIS (546 aa)). Fibronectin type-III domains are found at residues 47-152 (GPRN…TPPL), 152-258 (LGHI…PEVL), 259-359 (PQAK…LPAQ), 360-465 (ELTE…GNAS), and 469-565 (TPRH…VQIS). N-linked (GlcNAc...) asparagine glycosylation occurs at Asn-50. Cys-53 and Cys-63 are joined by a disulfide. 6 N-linked (GlcNAc...) asparagine glycosylation sites follow: Asn-73, Asn-86, Asn-130, Asn-144, Asn-169, and Asn-188. Positions 244–248 (WSDWS) match the WSXWS motif motif. Asn-330, Asn-368, Asn-374, Asn-401, Asn-463, and Asn-477 each carry an N-linked (GlcNAc...) asparagine glycan. Residues 566-591 (RLSIIFASLGSFASVLLVGSLGYIGL) form a helical membrane-spanning segment. Topologically, residues 592–738 (NRAAWHLCPP…PGPPTLGQEA (147 aa)) are cytoplasmic. A Box 1 motif motif is present at residues 598 to 606 (LCPPLPTPC).

The protein belongs to the type I cytokine receptor family. Type 2 subfamily. In terms of assembly, dimer or oligomer; disulfide-linked. Interacts with IL12RB2 to form the high affinity IL12 receptor. Heterodimer with IL23R; in presence of IL23. The heterodimer forms the IL23 receptor.

It is found in the membrane. Functionally, functions as an interleukin receptor which binds interleukin-12 with low affinity and is involved in IL12 transduction. Associated with IL12RB2 it forms a functional, high affinity receptor for IL12. Also associates with IL23R to form the interleukin-23 receptor which functions in IL23 signal transduction probably through activation of the Jak-Stat signaling cascade. The polypeptide is Interleukin-12 receptor subunit beta-1 (Il12rb1) (Mus musculus (Mouse)).